The chain runs to 280 residues: 4-diphosphocytidyl-2-C-methyl-D-erythritol kinase (280 aa).

Lys8 is an active-site residue. 91–101 (PVAAGLAGGST) serves as a coordination point for ATP. The active site involves Asp133.

It belongs to the GHMP kinase family. IspE subfamily.

The catalysed reaction is 4-CDP-2-C-methyl-D-erythritol + ATP = 4-CDP-2-C-methyl-D-erythritol 2-phosphate + ADP + H(+). It functions in the pathway isoprenoid biosynthesis; isopentenyl diphosphate biosynthesis via DXP pathway; isopentenyl diphosphate from 1-deoxy-D-xylulose 5-phosphate: step 3/6. Catalyzes the phosphorylation of the position 2 hydroxy group of 4-diphosphocytidyl-2C-methyl-D-erythritol. The protein is 4-diphosphocytidyl-2-C-methyl-D-erythritol kinase of Clostridium botulinum (strain 657 / Type Ba4).